Reading from the N-terminus, the 160-residue chain is Eukaryotic translation initiation factor 5A-4 (160 aa).

Basic and acidic residues predominate over residues 1–12 (MSDEEHHFESKA). The disordered stretch occupies residues 1-21 (MSDEEHHFESKADAGASKTYP). Position 52 is a hypusine (lysine 52).

This sequence belongs to the eIF-5A family. In terms of processing, lys-52 undergoes hypusination, a unique post-translational modification that consists in the addition of a butylamino group from spermidine to lysine side chain, leading to the formation of the unusual amino acid hypusine. eIF-5As are the only known proteins to undergo this modification, which is essential for their function.

Functionally, translation factor that promotes translation elongation and termination, particularly upon ribosome stalling at specific amino acid sequence contexts. Binds between the exit (E) and peptidyl (P) site of the ribosome and promotes rescue of stalled ribosome: specifically required for efficient translation of polyproline-containing peptides as well as other motifs that stall the ribosome. Acts as a ribosome quality control (RQC) cofactor by joining the RQC complex to facilitate peptidyl transfer during CAT tailing step. This Solanum lycopersicum (Tomato) protein is Eukaryotic translation initiation factor 5A-4.